Reading from the N-terminus, the 381-residue chain is Cytochrome b (381 aa).

4 helical membrane passes run 36-56 (FGSL…FLTM), 80-101 (WLIR…YIHI), 116-136 (WMVG…GYVL), and 181-201 (FYTF…IHLL). Histidine 86 and histidine 100 together coordinate heme b. Heme b-binding residues include histidine 185 and histidine 199. An a ubiquinone-binding site is contributed by histidine 204. 4 helical membrane passes run 229-249 (FKDM…TLTN), 291-311 (LGGV…PLTF), 323-343 (MNQI…WIGA), and 350-370 (YVFV…INPM).

The protein belongs to the cytochrome b family. The main subunits of complex b-c1 are: cytochrome b, cytochrome c1 and the Rieske protein. Requires heme b as cofactor.

Its subcellular location is the mitochondrion inner membrane. In terms of biological role, component of the ubiquinol-cytochrome c reductase complex (complex III or cytochrome b-c1 complex) that is part of the mitochondrial respiratory chain. The b-c1 complex mediates electron transfer from ubiquinol to cytochrome c. Contributes to the generation of a proton gradient across the mitochondrial membrane that is then used for ATP synthesis. The chain is Cytochrome b (MT-CYB) from Ostrinia nubilalis (European corn borer).